A 284-amino-acid polypeptide reads, in one-letter code: Shikimate dehydrogenase (NADP(+)) (284 aa).

Shikimate-binding positions include 19–21 (SFS) and T66. K70 (proton acceptor) is an active-site residue. Residue D82 participates in NADP(+) binding. Shikimate-binding residues include N91 and D106. NADP(+)-binding positions include 130–134 (GSGGS) and I226. Y228 contributes to the shikimate binding site. Residue G249 coordinates NADP(+).

It belongs to the shikimate dehydrogenase family. Homodimer.

The enzyme catalyses shikimate + NADP(+) = 3-dehydroshikimate + NADPH + H(+). It functions in the pathway metabolic intermediate biosynthesis; chorismate biosynthesis; chorismate from D-erythrose 4-phosphate and phosphoenolpyruvate: step 4/7. In terms of biological role, involved in the biosynthesis of the chorismate, which leads to the biosynthesis of aromatic amino acids. Catalyzes the reversible NADPH linked reduction of 3-dehydroshikimate (DHSA) to yield shikimate (SA). The sequence is that of Shikimate dehydrogenase (NADP(+)) from Methanococcus vannielii (strain ATCC 35089 / DSM 1224 / JCM 13029 / OCM 148 / SB).